A 425-amino-acid polypeptide reads, in one-letter code: 2,3-diketo-L-gulonate TRAP transporter large permease protein YiaN (425 aa).

11 helical membrane passes run 3-23, 54-74, 93-113, 139-159, 170-190, 209-229, 235-255, 277-297, 314-334, 355-375, and 399-419; these read VLIF…IAWA, FSLL…AGGL, LGYV…SAVA, LIAS…FIIF, LFMA…LTWW, IWHS…IIGG, FTPT…ATVI, VVMF…IAEL, LLFI…DLTP, IYFG…PPIG, and YVLV…LIIL.

It belongs to the TRAP transporter large permease family. In terms of assembly, the complex comprises the extracytoplasmic solute receptor protein YiaO, and the two transmembrane proteins YiaM and YiaN.

It localises to the cell inner membrane. In terms of biological role, part of the tripartite ATP-independent periplasmic (TRAP) transport system YiaMNO involved in the uptake of 2,3-diketo-L-gulonate. This chain is 2,3-diketo-L-gulonate TRAP transporter large permease protein YiaN (yiaN), found in Escherichia coli (strain K12).